The primary structure comprises 485 residues: Ataxin-10 (485 aa).

The protein belongs to the ataxin-10 family.

The protein resides in the cytoplasm. The protein localises to the perinuclear region. It localises to the midbody. May play a role in the regulation of cytokinesis. May play a role in signaling by stimulating protein glycosylation. Induces neuritogenesis by activating the Ras-MAP kinase pathway and is necessary for the survival of cerebellar neurons. Does not appear to play a major role in ciliogenesis. The sequence is that of Ataxin-10 (atxn10) from Xenopus tropicalis (Western clawed frog).